The chain runs to 483 residues: tRNA-2-methylthio-N(6)-dimethylallyladenosine synthase (483 aa).

An MTTase N-terminal domain is found at 31-148 (KKLYIETQGC…LPQMLDQHQD (118 aa)). Positions 40, 77, 111, 192, 196, and 199 each coordinate [4Fe-4S] cluster. The Radical SAM core domain occupies 178–410 (RVEGFKAFVS…QHWIKQSSIR (233 aa)). Residues 413 to 477 (DAMQGTIQRV…LNLVYGELLN (65 aa)) enclose the TRAM domain.

This sequence belongs to the methylthiotransferase family. MiaB subfamily. Monomer. The cofactor is [4Fe-4S] cluster.

It localises to the cytoplasm. The enzyme catalyses N(6)-dimethylallyladenosine(37) in tRNA + (sulfur carrier)-SH + AH2 + 2 S-adenosyl-L-methionine = 2-methylsulfanyl-N(6)-dimethylallyladenosine(37) in tRNA + (sulfur carrier)-H + 5'-deoxyadenosine + L-methionine + A + S-adenosyl-L-homocysteine + 2 H(+). Its function is as follows. Catalyzes the methylthiolation of N6-(dimethylallyl)adenosine (i(6)A), leading to the formation of 2-methylthio-N6-(dimethylallyl)adenosine (ms(2)i(6)A) at position 37 in tRNAs that read codons beginning with uridine. This Acinetobacter baylyi (strain ATCC 33305 / BD413 / ADP1) protein is tRNA-2-methylthio-N(6)-dimethylallyladenosine synthase.